A 172-amino-acid polypeptide reads, in one-letter code: Spermidine/spermine N(1)-acetyltransferase (172 aa).

The 170-residue stretch at 3–172 (VKMKKCSRED…TDLIMAKTLI (170 aa)) folds into the N-acetyltransferase domain. Acetyl-CoA contacts are provided by residues 96–98 (IYI), 105–109 (HGLGK), and 135–137 (NEN). Tyrosine 142 functions as the Proton donor in the catalytic mechanism. Lysine 144 serves as a coordination point for acetyl-CoA.

The protein belongs to the acetyltransferase family. As to quaternary structure, monomer.

It carries out the reaction an alkane-alpha,omega-diamine + acetyl-CoA = an N-acetylalkane-alpha,omega-diamine + CoA + H(+). In terms of biological role, involved in the protection against polyamine toxicity by regulating their concentration. Could also be involved in the negative control of sporulation as well as production of degradative enzymes such as alpha-amylase, levansucrase and alkaline phosphatase. Catalyzes the transfer of an acetyl group from acetyl coenzyme A (AcCoA) to an acceptor substrate and releases both CoA and the acetylated product. It possesses N1-acetyltransferase activity toward polyamine substrates including spermidine, spermine, aminopropylcadaverine, norspermidine, homospermidine, N(8)-acetylspermidine, diaminopropane and agmatine. The sequence is that of Spermidine/spermine N(1)-acetyltransferase from Bacillus subtilis (strain 168).